The sequence spans 476 residues: Aspartyl/glutamyl-tRNA(Asn/Gln) amidotransferase subunit B (476 aa).

It belongs to the GatB/GatE family. GatB subfamily. As to quaternary structure, heterotrimer of A, B and C subunits.

It carries out the reaction L-glutamyl-tRNA(Gln) + L-glutamine + ATP + H2O = L-glutaminyl-tRNA(Gln) + L-glutamate + ADP + phosphate + H(+). The enzyme catalyses L-aspartyl-tRNA(Asn) + L-glutamine + ATP + H2O = L-asparaginyl-tRNA(Asn) + L-glutamate + ADP + phosphate + 2 H(+). Its function is as follows. Allows the formation of correctly charged Asn-tRNA(Asn) or Gln-tRNA(Gln) through the transamidation of misacylated Asp-tRNA(Asn) or Glu-tRNA(Gln) in organisms which lack either or both of asparaginyl-tRNA or glutaminyl-tRNA synthetases. The reaction takes place in the presence of glutamine and ATP through an activated phospho-Asp-tRNA(Asn) or phospho-Glu-tRNA(Gln). The sequence is that of Aspartyl/glutamyl-tRNA(Asn/Gln) amidotransferase subunit B from Enterococcus faecalis (strain ATCC 700802 / V583).